We begin with the raw amino-acid sequence, 394 residues long: Cytochrome c oxidase subunit 2, mitochondrial (394 aa).

The transit peptide at 1 to 119 (ILCPLEAFIV…RNSRLIHSTS (119 aa)) directs the protein to the mitochondrion. Residues 120–181 (KIVPNSEIQN…MQGIIDLHHD (62 aa)) are Mitochondrial intermembrane-facing. Residues 182–198 (IFFFVIQIGVFVSWVLL) traverse the membrane as a helical segment. Over 199–226 (RALWHFRSKMNPIPQRIVHGTTIEILWT) the chain is Mitochondrial matrix. A helical transmembrane segment spans residues 227-243 (IFPSVILMFIAIPSFAL). At 244 to 394 (LYSMDDIVVD…YGSWVSSQVN (151 aa)) the chain is on the mitochondrial intermembrane side. Positions 327, 362, 364, 366, 370, and 373 each coordinate Cu cation. Glu-364 contacts Mg(2+).

Belongs to the cytochrome c oxidase subunit 2 family. Component of the cytochrome c oxidase (complex IV, CIV), a multisubunit enzyme composed of a catalytic core of 3 subunits and several supernumerary subunits. The complex exists as a monomer or a dimer and forms supercomplexes (SCs) in the inner mitochondrial membrane with ubiquinol-cytochrome c oxidoreductase (cytochrome b-c1 complex, complex III, CIII). Cu cation is required as a cofactor.

It localises to the mitochondrion inner membrane. It carries out the reaction 4 Fe(II)-[cytochrome c] + O2 + 8 H(+)(in) = 4 Fe(III)-[cytochrome c] + 2 H2O + 4 H(+)(out). Component of the cytochrome c oxidase, the last enzyme in the mitochondrial electron transport chain which drives oxidative phosphorylation. The respiratory chain contains 3 multisubunit complexes succinate dehydrogenase (complex II, CII), ubiquinol-cytochrome c oxidoreductase (cytochrome b-c1 complex, complex III, CIII) and cytochrome c oxidase (complex IV, CIV), that cooperate to transfer electrons derived from NADH and succinate to molecular oxygen, creating an electrochemical gradient over the inner membrane that drives transmembrane transport and the ATP synthase. Cytochrome c oxidase is the component of the respiratory chain that catalyzes the reduction of oxygen to water. Electrons originating from reduced cytochrome c in the intermembrane space (IMS) are transferred via the dinuclear copper A center (CU(A)) of subunit 2 and heme A of subunit 1 to the active site in subunit 1, a binuclear center (BNC) formed by heme A3 and copper B (CU(B)). The BNC reduces molecular oxygen to 2 water molecules using 4 electrons from cytochrome c in the IMS and 4 protons from the mitochondrial matrix. This chain is Cytochrome c oxidase subunit 2, mitochondrial (COX2), found in Glycine max (Soybean).